We begin with the raw amino-acid sequence, 338 residues long: 1-aminocyclopropane-1-carboxylate deaminase (338 aa).

Lysine 51 is modified (N6-(pyridoxal phosphate)lysine). The Nucleophile role is filled by serine 78.

Belongs to the ACC deaminase/D-cysteine desulfhydrase family. Homotrimer. The cofactor is pyridoxal 5'-phosphate.

The catalysed reaction is 1-aminocyclopropane-1-carboxylate + H2O = 2-oxobutanoate + NH4(+). Catalyzes a cyclopropane ring-opening reaction, the irreversible conversion of 1-aminocyclopropane-1-carboxylate (ACC) to ammonia and alpha-ketobutyrate. Allows growth on ACC as a nitrogen source. The polypeptide is 1-aminocyclopropane-1-carboxylate deaminase (Burkholderia pseudomallei (strain 1106a)).